Reading from the N-terminus, the 731-residue chain is Small conductance calcium-activated potassium channel protein 3 (731 aa).

The span at 1–11 shows a compositional bias: basic and acidic residues; it reads MDTSGHFHDSG. 2 disordered regions span residues 1–170 and 239–258; these read MDTS…SNPF and ATHN…FPKA. The segment covering 30 to 40 has biased composition (low complexity); the sequence is QQQQQQQQQQQ. Pro residues predominate over residues 41 to 51; it reads QPPPPAPPAAP. Low complexity predominate over residues 52 to 95; it reads QQPLGPSLQPQPPQLQQQQQQQQQQQQQQPPHPLSQLAQLQSQP. A compositionally biased stretch (polar residues) spans 112-132; the sequence is PSSNSTAILHPSSRQGSQLNL. Over residues 138 to 147 the composition is skewed to low complexity; the sequence is GHSPSSTATS. Ser-167 is modified (phosphoserine). Residues 239–256 show a composition bias toward polar residues; the sequence is ATHNHQHAGTTASSTTFP. The helical transmembrane segment at 288-308 threads the bilayer; it reads LIFGMFGIVVMVIETELSWGL. The helical transmembrane segment at 315–335 threads the bilayer; sequence FSLALKCLISLSTIILLGLII. Residues 366-386 traverse the membrane as a helical segment; the sequence is ISLEMLVCAIHPIPGEYKFFW. A helical transmembrane segment spans residues 405 to 425; sequence IILSIPMFLRLYLIARVMLLH. Residues 454-474 traverse the membrane as a helical segment; it reads LMTICPGTVLLVFSISLWIIA. An intramembrane region (pore-forming) is located at residues 494–514; that stretch reads FLGAMWLISITFLSIGYGDMV. The chain crosses the membrane as a helical span at residues 523-543; the sequence is VCLLTGIMGAGCTALVVAVVA. A calmodulin-binding region spans residues 561–637; sequence DTQLTKRIKN…LVDLSKMQNV (77 aa). A coiled-coil region spans residues 642 to 669; that stretch reads ITELNDRSEDLEKQIGSLESKLEHLTAS. The tract at residues 709-731 is disordered; it reads ISDSPIGVSSTSFPTPYTSSSSC. Residues 717 to 731 show a composition bias toward low complexity; it reads SSTSFPTPYTSSSSC.

This sequence belongs to the potassium channel KCNN family. KCa2.3/KCNN3 subfamily. In terms of assembly, homodimer. Heteromultimer with KCNN2 or KCNN1; this modulates plasma membrane expression and consequently the small conductance calcium-activated potassium channel activity. The complex is composed of 4 channel subunits each of which binds to a calmodulin subunit which regulates the channel activity through calcium-binding. Interacts with CALM1. As to expression, widely distributed in human tissues and is present at 20-60% of KCNN3 in the brain.

The protein resides in the cell membrane. It is found in the cytoplasm. The protein localises to the myofibril. Its subcellular location is the sarcomere. It localises to the z line. The enzyme catalyses K(+)(in) = K(+)(out). Inhibited by bee venom neurotoxin apamin. Its function is as follows. Small conductance calcium-activated potassium channel that mediates the voltage-independent transmembrane transfer of potassium across the cell membrane through a constitutive interaction with calmodulin which binds the intracellular calcium allowing its opening. The current is characterized by a voltage-independent activation, an intracellular calcium concentration increase-dependent activation and a single-channel conductance of 10 picosiemens. Also presents an inwardly rectifying current, thus reducing its already small outward conductance of potassium ions, which is particularly the case when the membrane potential displays positive values, above + 20 mV. Activation is followed by membrane hyperpolarization. Thought to regulate neuronal excitability by contributing to the slow component of synaptic afterhyperpolarization. In terms of biological role, does not function as a small conductance calcium-activated potassium channel. Selectively suppresses endogenous KCNN3 currents, in a dominant-negative fashion by decreasing the abundance of functional channels in the plasma membrane, possibly by selectively coassembling with and sequestering native KCNN3 protein in intracellular compartments. This dominant inhibitory effect extends to other members of the SK subfamily. The sequence is that of Small conductance calcium-activated potassium channel protein 3 from Homo sapiens (Human).